A 132-amino-acid chain; its full sequence is Spermatogenesis-associated protein 33 (132 aa).

Positions 1–60 (MGQSKSKPREKKEEEKSTTTLVTKSKEKVMEKEAKQSDKESQPAESLLFATSKHSRPSSS) are interaction with ATG16L1. Positions 1–81 (MGQSKSKPRE…SKKRSVIPQI (81 aa)) are disordered. Positions 24-42 (KSKEKVMEKEAKQSDKESQ) are enriched in basic and acidic residues. Residues 61–132 (SEDKPETKQR…IAAYDVHNTE (72 aa)) are interaction with VDAC2. The PQIIIT signature appears at 79-84 (PQIIIT). Position 87 is a phosphoserine (serine 87). The tract at residues 110-132 (DWGPYHRHRSPSTIAAYDVHNTE) is disordered.

Interacts (via PQIIIT motif) with PPP3R2 and PPP3CC. Interacts with VDAC2. Interacts with ATG16L1 (via WD repeats). Interacts with PPP3R1, PPP3CA and PPP3CB. Predominantly expressed in the testis (at protein level). Expressed in the sperm midpiece (at protein level).

It localises to the cytoplasm. Its subcellular location is the cytosol. It is found in the nucleus. The protein resides in the mitochondrion. Its function is as follows. Plays an important role in sperm motility and male fertility. Required for sperm midpiece flexibility and for the localization of sperm calcineurin to the mitochondria. Promotes mitophagy as well as acts as an autophagy mediator in male germline cells. Links damaged mitochondria to autophagosomes via its binding to the outer mitochondrial membrane protein VDAC2, as well as to key autophagy machinery component ATG16L1. The protein is Spermatogenesis-associated protein 33 (Spata33) of Mus musculus (Mouse).